A 766-amino-acid chain; its full sequence is General transcription and DNA repair factor IIH helicase/translocase subunit XPB2 (766 aa).

Positions 1 to 56 (MGNDERKRPTKKMKYGGKDDQKMKNIQNVEDYYDDADEDSRDGEGEEKRRDFTDLE) are disordered. A compositionally biased stretch (acidic residues) spans 31 to 41 (DYYDDADEDSR). The segment covering 42-56 (DGEGEEKRRDFTDLE) has biased composition (basic and acidic residues). The Helicase ATP-binding domain maps to 293–455 (MFGNGRARSG…DLNFLIGPKL (163 aa)). 306 to 313 (LPCGAGKS) lines the ATP pocket. The short motif at 408 to 411 (DEVH) is the DEVH box element. Positions 510–676 (RACEFLIRFH…SLPPPDAGSS (167 aa)) constitute a Helicase C-terminal domain. Over residues 739 to 748 (SGRQKSGNQS) the composition is skewed to polar residues. The tract at residues 739-766 (SGRQKSGNQSKKPKDPTKRHNIFKKRYV) is disordered. Residues 749 to 765 (KKPKDPTKRHNIFKKRY) carry the Nuclear localization signal motif. The span at 757 to 766 (RHNIFKKRYV) shows a compositional bias: basic residues.

This sequence belongs to the helicase family. RAD25/XPB subfamily. As to quaternary structure, component of the 7-subunit TFIIH core complex composed of XPB, XPD, TFB1/GTF2H1, GTF2H2/P44, TFB4/GTF2H3, TFB2/GTF2H4 and TFB5/GTF2H5, which is active in NER. The core complex associates with the 3-subunit CDK-activating kinase (CAK) module composed of CYCH1/cyclin H1, CDKD and MAT1/At4g30820 to form the 10-subunit holoenzyme (holo-TFIIH) active in transcription. In terms of tissue distribution, expressed ubiquitously.

It is found in the nucleus. The catalysed reaction is Couples ATP hydrolysis with the unwinding of duplex DNA by translocating in the 3'-5' direction.. The enzyme catalyses ATP + H2O = ADP + phosphate + H(+). In terms of biological role, ATP-dependent 3'-5' DNA helicase/translocase; binds dsDNA rather than ssDNA, unzipping it in a translocase rather than classical helicase activity. Component of the general transcription and DNA repair factor IIH (TFIIH) core complex. When complexed to CDK-activating kinase (CAK), involved in RNA transcription by RNA polymerase II. The ATPase activity of XPB/ERCC3, but not its helicase activity, is required for DNA opening; it may wrap around the damaged DNA wedging it open, causing localized melting and twisting that allows XPD/ERCC2 helicase to anchor. The ATP-dependent helicase activity of XPB/ERCC3 may be required for promoter escape. Also involved in transcription-coupled nucleotide excision repair (NER) of damaged DNA. In NER, TFIIH acts by opening DNA around the lesion to allow the excision of the damaged oligonucleotide and its replacement by a new DNA fragment. The structure of the TFIIH transcription complex differs from the NER-TFIIH complex. Partially complements UV sensitivity of a yeast SSL2 mutation. The sequence is that of General transcription and DNA repair factor IIH helicase/translocase subunit XPB2 (XPB2) from Arabidopsis thaliana (Mouse-ear cress).